Reading from the N-terminus, the 229-residue chain is MGKKYTESVKLVDKNALYTVQEAIELVTKTSKAKFDETVELAVRLGVDPRHADQQVRGAVVLPHGTGKTVRVLVFAKGDKVNEAQEAGADFVGAEELVEKIQKENWFDFDVVVATPDMMGVVGRLGRVLGPKGLMPNPKSGTVTFDVAKAIADIKAGKVEYRVDKTAIIHVPIGKSSFGEEKLSDNFHVLMEAVVKAKPAAAKGQYIKSVAISSTMGPGIKINPGKVLE.

It belongs to the universal ribosomal protein uL1 family. As to quaternary structure, part of the 50S ribosomal subunit.

Its function is as follows. Binds directly to 23S rRNA. The L1 stalk is quite mobile in the ribosome, and is involved in E site tRNA release. Functionally, protein L1 is also a translational repressor protein, it controls the translation of the L11 operon by binding to its mRNA. This is Large ribosomal subunit protein uL1 from Clostridium botulinum (strain Loch Maree / Type A3).